The following is a 261-amino-acid chain: Spermatogenesis-associated protein 46 (261 aa).

The segment at 140–159 is disordered; the sequence is SSSSSPENTCPREATKKSRH.

As to expression, testis-specific.

It localises to the nucleus membrane. Plays a role in spermiogenesis and fertilization. The chain is Spermatogenesis-associated protein 46 from Homo sapiens (Human).